Consider the following 257-residue polypeptide: 5-oxoprolinase subunit A (257 aa).

The protein belongs to the LamB/PxpA family. In terms of assembly, forms a complex composed of PxpA, PxpB and PxpC.

It catalyses the reaction 5-oxo-L-proline + ATP + 2 H2O = L-glutamate + ADP + phosphate + H(+). In terms of biological role, catalyzes the cleavage of 5-oxoproline to form L-glutamate coupled to the hydrolysis of ATP to ADP and inorganic phosphate. The protein is 5-oxoprolinase subunit A of Bacillus subtilis (strain 168).